A 440-amino-acid chain; its full sequence is Armadillo-like helical domain containing protein 1 (440 aa).

This Homo sapiens (Human) protein is Armadillo-like helical domain containing protein 1.